The following is a 37-amino-acid chain: Large ribosomal subunit protein bL36 (37 aa).

The protein belongs to the bacterial ribosomal protein bL36 family.

The polypeptide is Large ribosomal subunit protein bL36 (Solidesulfovibrio magneticus (strain ATCC 700980 / DSM 13731 / RS-1) (Desulfovibrio magneticus)).